The primary structure comprises 308 residues: Apolipoprotein E (308 aa).

Residues 1-18 (MKFLWAALVVTLLAGCRA) form the signal peptide. Repeat copies occupy residues 75 to 96 (LLIEETMKEVKAYKEELEKQVG), 97 to 118 (PIAQETQARLSKELQAAQARLE), 119 to 140 (SDMEDVRTRLAQYRSEAQAALG), 141 to 162 (QNTDDLQGRLASHLRKLRKRLL), 163 to 184 (RDAEDLQKRLAVYQAGTREAAE), 185 to 206 (RGVSAVHERLGPLMMEGPLQAI), 207 to 224 (PPSQQLRERAEAWGQKVR), and 225 to 246 (GRLESVGSQARDRLDDMRDQME). The interval 75–246 (LLIEETMKEV…RLDDMRDQME (172 aa)) is 8 X 22 AA approximate tandem repeats. Residues 153-163 (HLRKLRKRLLR) are LDL and other lipoprotein receptors binding. Residue 157–160 (LRKR) participates in heparin binding. The lipid-binding and lipoprotein association stretch occupies residues 205 to 281 (AIPPSQQLRE…SWFEPLVQDM (77 aa)). 220 to 227 (GQKVRGRL) provides a ligand contact to heparin. The segment at 257-308 (SQVRLQAEAFQTRLKSWFEPLVQDMQRQWASLVEKVQSTLGISPSTKPSKTK) is homooligomerization. The specificity for association with VLDL stretch occupies residues 269–281 (RLKSWFEPLVQDM).

Belongs to the apolipoprotein A1/A4/E family. In terms of assembly, homotetramer. May interact with ABCA1; functionally associated with ABCA1 in the biogenesis of HDLs. May interact with APP/A4 amyloid-beta peptide; the interaction is extremely stable in vitro but its physiological significance is unclear. May interact with MAPT. May interact with MAP2. In the cerebrospinal fluid, interacts with secreted SORL1. Interacts with PMEL; this allows the loading of PMEL luminal fragment on ILVs to induce fibril nucleation. Post-translationally, APOE exists as multiple glycosylated and sialylated glycoforms within cells and in plasma. The extent of glycosylation and sialylation are tissue and context specific. Glycated in plasma VLDL. In terms of processing, phosphorylated by FAM20C in the extracellular medium.

It localises to the secreted. It is found in the extracellular space. The protein localises to the extracellular matrix. Its subcellular location is the extracellular vesicle. The protein resides in the endosome. It localises to the multivesicular body. Functionally, APOE is an apolipoprotein, a protein associating with lipid particles, that mainly functions in lipoprotein-mediated lipid transport between organs via the plasma and interstitial fluids. APOE is a core component of plasma lipoproteins and is involved in their production, conversion and clearance. Apolipoproteins are amphipathic molecules that interact both with lipids of the lipoprotein particle core and the aqueous environment of the plasma. As such, APOE associates with chylomicrons, chylomicron remnants, very low density lipoproteins (VLDL) and intermediate density lipoproteins (IDL) but shows a preferential binding to high-density lipoproteins (HDL). It also binds a wide range of cellular receptors including the LDL receptor/LDLR and the very low-density lipoprotein receptor/VLDLR that mediate the cellular uptake of the APOE-containing lipoprotein particles. Finally, APOE also has a heparin-binding activity and binds heparan-sulfate proteoglycans on the surface of cells, a property that supports the capture and the receptor-mediated uptake of APOE-containing lipoproteins by cells. The chain is Apolipoprotein E (APOE) from Pteropus vampyrus (Large flying fox).